Consider the following 207-residue polypeptide: MARYIGPKAKLSRREGTDLFLKSARRSLADKCKLDSKPGQHGRTSGARTSDYGTQLREKQKVKRIYGVLERQFRRYFAEADRLKGNTGENLLQLLESRLDNVVYRMGFGSTRAEARQLVSHKAIMVNGVVSNIPSMQVKAGDVVAVREQKKKQARILEALSLAEQGGLPSWVAVDSKKFEGTFKQKPERSDIAGDINESLIVELYSR.

The disordered stretch occupies residues 31–55 (KCKLDSKPGQHGRTSGARTSDYGTQ). Over residues 42-53 (GRTSGARTSDYG) the composition is skewed to polar residues. In terms of domain architecture, S4 RNA-binding spans 97–157 (SRLDNVVYRM…EQKKKQARIL (61 aa)).

Belongs to the universal ribosomal protein uS4 family. Part of the 30S ribosomal subunit. Contacts protein S5. The interaction surface between S4 and S5 is involved in control of translational fidelity.

Its function is as follows. One of the primary rRNA binding proteins, it binds directly to 16S rRNA where it nucleates assembly of the body of the 30S subunit. With S5 and S12 plays an important role in translational accuracy. The polypeptide is Small ribosomal subunit protein uS4 (Paraburkholderia xenovorans (strain LB400)).